Reading from the N-terminus, the 342-residue chain is Probable dual-specificity RNA methyltransferase RlmN (342 aa).

The active-site Proton acceptor is the E91. In terms of domain architecture, Radical SAM core spans 97 to 327; sequence YKHGNSICVS…TTIRREMGAD (231 aa). C104 and C332 are joined by a disulfide. [4Fe-4S] cluster-binding residues include C111, C115, and C118. S-adenosyl-L-methionine is bound by residues 158–159, S190, 213–215, and N289; these read GE and SLH. C332 serves as the catalytic S-methylcysteine intermediate.

It belongs to the radical SAM superfamily. RlmN family. Requires [4Fe-4S] cluster as cofactor.

The protein localises to the cytoplasm. The enzyme catalyses adenosine(2503) in 23S rRNA + 2 reduced [2Fe-2S]-[ferredoxin] + 2 S-adenosyl-L-methionine = 2-methyladenosine(2503) in 23S rRNA + 5'-deoxyadenosine + L-methionine + 2 oxidized [2Fe-2S]-[ferredoxin] + S-adenosyl-L-homocysteine. It catalyses the reaction adenosine(37) in tRNA + 2 reduced [2Fe-2S]-[ferredoxin] + 2 S-adenosyl-L-methionine = 2-methyladenosine(37) in tRNA + 5'-deoxyadenosine + L-methionine + 2 oxidized [2Fe-2S]-[ferredoxin] + S-adenosyl-L-homocysteine. Its function is as follows. Specifically methylates position 2 of adenine 2503 in 23S rRNA and position 2 of adenine 37 in tRNAs. The protein is Probable dual-specificity RNA methyltransferase RlmN of Clostridium botulinum (strain Loch Maree / Type A3).